Here is a 154-residue protein sequence, read N- to C-terminus: Ubiquitin-conjugating enzyme E2 L5 (154 aa).

The region spanning 2-149 (AASRRLMKEL…AEEFTKKYGE (148 aa)) is the UBC core domain. Cys-86 functions as the Glycyl thioester intermediate in the catalytic mechanism.

It belongs to the ubiquitin-conjugating enzyme family.

It catalyses the reaction S-ubiquitinyl-[E1 ubiquitin-activating enzyme]-L-cysteine + [E2 ubiquitin-conjugating enzyme]-L-cysteine = [E1 ubiquitin-activating enzyme]-L-cysteine + S-ubiquitinyl-[E2 ubiquitin-conjugating enzyme]-L-cysteine.. Its pathway is protein modification; protein ubiquitination. Functionally, catalyzes the covalent attachment of ubiquitin to other proteins. The polypeptide is Ubiquitin-conjugating enzyme E2 L5 (Homo sapiens (Human)).